The sequence spans 100 residues: Urease subunit gamma (100 aa).

Belongs to the urease gamma subunit family. In terms of assembly, heterotrimer of UreA (gamma), UreB (beta) and UreC (alpha) subunits. Three heterotrimers associate to form the active enzyme.

Its subcellular location is the cytoplasm. It catalyses the reaction urea + 2 H2O + H(+) = hydrogencarbonate + 2 NH4(+). The protein operates within nitrogen metabolism; urea degradation; CO(2) and NH(3) from urea (urease route): step 1/1. In Marinomonas sp. (strain MWYL1), this protein is Urease subunit gamma.